A 166-amino-acid chain; its full sequence is Myeloid-derived growth factor (166 aa).

The signal sequence occupies residues 1 to 24 (MAAPSGGFWTAVVLAAAALKLAAA).

This sequence belongs to the MYDGF family. Expressed in prostate, spleen and lung, and weakly expressed in the left ventricle (LF) and liver. Expressed predominantly in inflammatory cells, such as monocytes and macrophages, and weakly expressed in neutrophils, T-cells, B-cells, endothelial cells and cardiac myocytes, after myocardial infarction (MI) (at protein level).

The protein localises to the secreted. It is found in the endoplasmic reticulum-Golgi intermediate compartment. The protein resides in the endoplasmic reticulum. Its subcellular location is the golgi apparatus. Functionally, bone marrow-derived monocyte and paracrine-acting protein that promotes cardiac myocyte survival and adaptive angiogenesis for cardiac protection and/or repair after myocardial infarction (MI). Stimulates endothelial cell proliferation through a MAPK1/3-, STAT3- and CCND1-mediated signaling pathway. Inhibits cardiac myocyte apoptosis in a PI3K/AKT-dependent signaling pathway. The polypeptide is Myeloid-derived growth factor (Mus musculus (Mouse)).